The sequence spans 354 residues: Stearoyl-CoA desaturase (354 aa).

The disordered stretch occupies residues methionine 1–serine 28. Residues methionine 1–valine 67 lie on the Cytoplasmic side of the membrane. A compositionally biased stretch (low complexity) spans glutamate 8–serine 28. The chain crosses the membrane as a helical span at residues tryptophan 68 to valine 88. Asparagine 70 is a binding site for substrate. At proline 89 to lysine 92 the chain is on the lumenal side. Residues valine 93 to glycine 113 form a helical membrane-spanning segment. The Cytoplasmic portion of the chain corresponds to valine 114 to tyrosine 212. Positions 115 and 120 each coordinate Fe cation. The Histidine box-1 signature appears at histidine 115 to histidine 120. Residues asparagine 143, arginine 150, and aspartate 151 each contribute to the substrate site. Fe cation-binding residues include histidine 152, histidine 155, and histidine 156. The short motif at histidine 152–histidine 156 is the Histidine box-2 element. Substrate-binding residues include arginine 183 and lysine 184. The residue at position 198 (serine 198) is a Phosphoserine. A helical membrane pass occupies residues tyrosine 213–phenylalanine 232. Residues tryptophan 233–alanine 236 lie on the Lumenal side of the membrane. The helical transmembrane segment at phenylalanine 237–leucine 258 threads the bilayer. Tryptophan 257 contacts substrate. The Cytoplasmic portion of the chain corresponds to valine 259–glycine 354. Residues histidine 264, histidine 293, histidine 296, and histidine 297 each contribute to the Fe cation site. Positions histidine 293–histidine 297 match the Histidine box-3 motif.

It belongs to the fatty acid desaturase type 1 family. Fe(2+) serves as cofactor.

It localises to the endoplasmic reticulum membrane. It carries out the reaction octadecanoyl-CoA + 2 Fe(II)-[cytochrome b5] + O2 + 2 H(+) = (9Z)-octadecenoyl-CoA + 2 Fe(III)-[cytochrome b5] + 2 H2O. The catalysed reaction is hexadecanoyl-CoA + 2 Fe(II)-[cytochrome b5] + O2 + 2 H(+) = (9Z)-hexadecenoyl-CoA + 2 Fe(III)-[cytochrome b5] + 2 H2O. Its function is as follows. Stearoyl-CoA desaturase that utilizes O(2) and electrons from reduced cytochrome b5 to introduce the first double bond into saturated fatty acyl-CoA substrates. Catalyzes the insertion of a cis double bond at the delta-9 position into fatty acyl-CoA substrates including palmitoyl-CoA and stearoyl-CoA. Gives rise to a mixture of 16:1 and 18:1 unsaturated fatty acids. Plays an important role in lipid biosynthesis. Plays an important role in regulating the expression of genes that are involved in lipogenesis and in regulating mitochondrial fatty acid oxidation. Plays an important role in body energy homeostasis. Contributes to the biosynthesis of membrane phospholipids, cholesterol esters and triglycerides. This is Stearoyl-CoA desaturase (SCD) from Mesocricetus auratus (Golden hamster).